Here is a 257-residue protein sequence, read N- to C-terminus: Uroplakin-1a (257 aa).

The Cytoplasmic portion of the chain corresponds to M1–P13. A helical transmembrane segment spans residues V14 to F34. Topologically, residues A35–D58 are extracellular. The helical transmembrane segment at V59–L85 threads the bilayer. Residues C86–Y90 lie on the Cytoplasmic side of the membrane. A helical transmembrane segment spans residues M91–I111. Residues T112–T229 are Extracellular-facing. N169 is a glycosylation site (N-linked (GlcNAc...) asparagine). The chain crosses the membrane as a helical span at residues W230–M251. Topologically, residues Y252 to L257 are cytoplasmic.

This sequence belongs to the tetraspanin (TM4SF) family. As to quaternary structure, homodimer; disulfide-linked. Interacts with uroplakin-2 (UPK2). Binds to uropathogenic E.coli fimH.

The protein resides in the membrane. In terms of biological role, component of the asymmetric unit membrane (AUM); a highly specialized biomembrane elaborated by terminally differentiated urothelial cells. May play an important role in normal bladder epithelial physiology, possibly in regulating membrane permeability of superficial umbrella cells or in stabilizing the apical membrane through AUM/cytoskeletal interactions. The sequence is that of Uroplakin-1a (Upk1a) from Mus musculus (Mouse).